We begin with the raw amino-acid sequence, 37 residues long: Large ribosomal subunit protein bL36 (37 aa).

It belongs to the bacterial ribosomal protein bL36 family.

This chain is Large ribosomal subunit protein bL36, found in Variovorax paradoxus (strain S110).